The primary structure comprises 344 residues: AA9 family lytic polysaccharide monooxygenase cel61A (344 aa).

The first 21 residues, Met1 to Gly21, serve as a signal peptide directing secretion. Cu(2+) is bound at residue His22. Intrachain disulfides connect Cys77/Cys198 and Cys118/Cys122. Asn80 is a glycosylation site (N-linked (GlcNAc...) asparagine). Residue His107 coordinates Cu(2+). An N-linked (GlcNAc...) asparagine glycan is attached at Asn158. Residues His184 and Gln193 each contribute to the O2 site. Position 195 (Tyr195) interacts with Cu(2+). Positions Ala262 to Thr310 are disordered. Low complexity predominate over residues Pro275 to Thr310. Residues Pro307–Leu343 form the CBM1 domain.

The protein belongs to the polysaccharide monooxygenase AA9 family. Requires Cu(2+) as cofactor.

The protein resides in the secreted. It catalyses the reaction [(1-&gt;4)-beta-D-glucosyl]n+m + reduced acceptor + O2 = 4-dehydro-beta-D-glucosyl-[(1-&gt;4)-beta-D-glucosyl]n-1 + [(1-&gt;4)-beta-D-glucosyl]m + acceptor + H2O.. Lytic polysaccharide monooxygenase (LPMO) that depolymerizes crystalline and amorphous polysaccharides via the oxidation of scissile alpha- or beta-(1-4)-glycosidic bonds, yielding C1 or C4 oxidation products. Catalysis by LPMOs requires the reduction of the active-site copper from Cu(II) to Cu(I) by a reducing agent and H(2)O(2) or O(2) as a cosubstrate. Shows activity on beta-glucan and amorphous cellulose. Does not show beta-1-3-glucanase, beta-1,6-glucanase, mannanase, xylanase, beta-1,3-galactosidase, amylase, pectinase, nor chitinase activities. This chain is AA9 family lytic polysaccharide monooxygenase cel61A, found in Hypocrea jecorina (Trichoderma reesei).